The sequence spans 139 residues: Large ribosomal subunit protein uL16 (139 aa).

The span at 1–16 (MLIPKRTKYRKQHRPV) shows a compositional bias: basic residues. Positions 1–22 (MLIPKRTKYRKQHRPVRSGMSK) are disordered.

Belongs to the universal ribosomal protein uL16 family. As to quaternary structure, part of the 50S ribosomal subunit.

Functionally, binds 23S rRNA and is also seen to make contacts with the A and possibly P site tRNAs. In Bifidobacterium longum subsp. infantis (strain ATCC 15697 / DSM 20088 / JCM 1222 / NCTC 11817 / S12), this protein is Large ribosomal subunit protein uL16.